Consider the following 346-residue polypeptide: Holliday junction branch migration complex subunit RuvB (346 aa).

Residues Met-1–Tyr-182 are large ATPase domain (RuvB-L). ATP contacts are provided by residues Arg-22, Gly-63, Lys-66, Thr-67, Thr-68, Glu-129–Phe-131, Arg-172, Tyr-182, and Arg-219. Thr-67 provides a ligand contact to Mg(2+). Residues Thr-183–Leu-253 form a small ATPAse domain (RuvB-S) region. Positions Ser-256 to Asp-346 are head domain (RuvB-H). Positions 292, 311, and 316 each coordinate DNA.

This sequence belongs to the RuvB family. Homohexamer. Forms an RuvA(8)-RuvB(12)-Holliday junction (HJ) complex. HJ DNA is sandwiched between 2 RuvA tetramers; dsDNA enters through RuvA and exits via RuvB. An RuvB hexamer assembles on each DNA strand where it exits the tetramer. Each RuvB hexamer is contacted by two RuvA subunits (via domain III) on 2 adjacent RuvB subunits; this complex drives branch migration. In the full resolvosome a probable DNA-RuvA(4)-RuvB(12)-RuvC(2) complex forms which resolves the HJ.

It localises to the cytoplasm. The enzyme catalyses ATP + H2O = ADP + phosphate + H(+). The RuvA-RuvB-RuvC complex processes Holliday junction (HJ) DNA during genetic recombination and DNA repair, while the RuvA-RuvB complex plays an important role in the rescue of blocked DNA replication forks via replication fork reversal (RFR). RuvA specifically binds to HJ cruciform DNA, conferring on it an open structure. The RuvB hexamer acts as an ATP-dependent pump, pulling dsDNA into and through the RuvAB complex. RuvB forms 2 homohexamers on either side of HJ DNA bound by 1 or 2 RuvA tetramers; 4 subunits per hexamer contact DNA at a time. Coordinated motions by a converter formed by DNA-disengaged RuvB subunits stimulates ATP hydrolysis and nucleotide exchange. Immobilization of the converter enables RuvB to convert the ATP-contained energy into a lever motion, pulling 2 nucleotides of DNA out of the RuvA tetramer per ATP hydrolyzed, thus driving DNA branch migration. The RuvB motors rotate together with the DNA substrate, which together with the progressing nucleotide cycle form the mechanistic basis for DNA recombination by continuous HJ branch migration. Branch migration allows RuvC to scan DNA until it finds its consensus sequence, where it cleaves and resolves cruciform DNA. The sequence is that of Holliday junction branch migration complex subunit RuvB from Rhizobium meliloti (strain 1021) (Ensifer meliloti).